A 225-amino-acid chain; its full sequence is Germin-like protein 8-3 (225 aa).

Positions 1-23 (MASSSLFLLASLLVLASWQQAIA) are cleaved as a signal peptide. A disulfide bond links Cys33 and Cys48. Asn53 and Asn78 each carry an N-linked (GlcNAc...) asparagine glycan. Residues 60–213 (FNAAKFDMPR…AFQVEKKVID (154 aa)) form the Cupin type-1 domain. Mn(2+)-binding residues include His111, His113, Glu118, and His158.

Belongs to the germin family. As to quaternary structure, oligomer (believed to be a pentamer but probably hexamer).

It is found in the secreted. It localises to the extracellular space. The protein localises to the apoplast. Its function is as follows. Plays a role in broad-spectrum disease resistance. Probably has no oxalate oxidase activity even if the active site is conserved. This chain is Germin-like protein 8-3 (GER2), found in Oryza sativa subsp. japonica (Rice).